We begin with the raw amino-acid sequence, 203 residues long: Ras-like protein family member 10A (203 aa).

The segment at 1 to 203 is small GTPase-like; it reads MGGSLRVAVL…ALHPARCSLM (203 aa). Position 11–18 (11–18) interacts with GTP; sequence GAPGVGKT. The Effector region signature appears at 33-42; sequence HRPTDSPCLY. Residues 59 to 62 and 129 to 132 contribute to the GTP site; these read DGDV and NKRD. Residue Cys200 is modified to Cysteine methyl ester. Residue Cys200 is the site of S-farnesyl cysteine attachment. Positions 201–203 are cleaved as a propeptide — removed in mature form; sequence SLM.

Belongs to the small GTPase superfamily. Ras family. Post-translationally, isoprenylation is essential for nucleolar localization, and the proliferation-inhibiting activity of RASL10A.

The protein localises to the cell membrane. The protein resides in the nucleus. It is found in the nucleolus. The catalysed reaction is GTP + H2O = GDP + phosphate + H(+). Functionally, potent inhibitor of cellular proliferation. This is Ras-like protein family member 10A (Rasl10a) from Mus musculus (Mouse).